The primary structure comprises 371 residues: Putative glutamate--cysteine ligase 2 (371 aa).

It belongs to the glutamate--cysteine ligase type 2 family. YbdK subfamily.

It catalyses the reaction L-cysteine + L-glutamate + ATP = gamma-L-glutamyl-L-cysteine + ADP + phosphate + H(+). Its function is as follows. ATP-dependent carboxylate-amine ligase which exhibits weak glutamate--cysteine ligase activity. The chain is Putative glutamate--cysteine ligase 2 from Burkholderia cenocepacia (strain HI2424).